The primary structure comprises 202 residues: ATP synthase subunit b (202 aa).

A helical membrane pass occupies residues 9–29 (TTLSLCLAVCVVVIAVGTGWA).

The protein belongs to the ATPase B chain family. As to quaternary structure, F-type ATPases have 2 components, F(1) - the catalytic core - and F(0) - the membrane proton channel. F(1) has five subunits: alpha(3), beta(3), gamma(1), delta(1), epsilon(1). F(0) has three main subunits: a(1), b(2) and c(10-14). The alpha and beta chains form an alternating ring which encloses part of the gamma chain. F(1) is attached to F(0) by a central stalk formed by the gamma and epsilon chains, while a peripheral stalk is formed by the delta and b chains.

The protein localises to the cell inner membrane. In terms of biological role, f(1)F(0) ATP synthase produces ATP from ADP in the presence of a proton or sodium gradient. F-type ATPases consist of two structural domains, F(1) containing the extramembraneous catalytic core and F(0) containing the membrane proton channel, linked together by a central stalk and a peripheral stalk. During catalysis, ATP synthesis in the catalytic domain of F(1) is coupled via a rotary mechanism of the central stalk subunits to proton translocation. Functionally, component of the F(0) channel, it forms part of the peripheral stalk, linking F(1) to F(0). The polypeptide is ATP synthase subunit b (Pelobacter propionicus (strain DSM 2379 / NBRC 103807 / OttBd1)).